The primary structure comprises 215 residues: GTP-binding protein YPT6 (215 aa).

17–24 (GEQGVGKT) contributes to the GTP binding site. The short motif at 39–47 (YQATIGIDF) is the Effector region element. Residues 65–69 (DTAGQ) and 124–127 (NKSD) each bind GTP. Polar residues predominate over residues 178 to 196 (NSESTPLDSENANSANQNK). The disordered stretch occupies residues 178 to 215 (NSESTPLDSENANSANQNKPGVIDISTAEEQEQSACQC). S-geranylgeranyl cysteine attachment occurs at residues Cys213 and Cys215. Position 215 is a cysteine methyl ester (Cys215).

This sequence belongs to the small GTPase superfamily. Rab family. As to quaternary structure, interacts with YIF1, YIP3 and YIP4.

The protein localises to the cell membrane. Protein transport. Might participate in post-Golgi transport. The sequence is that of GTP-binding protein YPT6 (YPT6) from Saccharomyces cerevisiae (strain ATCC 204508 / S288c) (Baker's yeast).